The chain runs to 148 residues: MNATKFVVLLVIGILCAIVTARQVKDLSTETKLGASLPKTTTKGIGAQLSATGTTYSTSSVVSYANGFNNPKGPGANSFESANTFTSGQVTAKGRKARVSSTSASAAEGDAAAAVTRKAAAARANGKVASASRVKGSSEKKKGKGKKD.

The first 21 residues, 1–21 (MNATKFVVLLVIGILCAIVTA), serve as a signal peptide directing secretion. Positions 123 to 132 (RANGKVASAS) are enriched in low complexity. The tract at residues 123–148 (RANGKVASASRVKGSSEKKKGKGKKD) is disordered.

Belongs to the UPF0540 family.

The chain is UPF0540 protein At1g62000 from Arabidopsis thaliana (Mouse-ear cress).